A 466-amino-acid polypeptide reads, in one-letter code: Methylenetetrahydrofolate--tRNA-(uracil-5-)-methyltransferase TrmFO (466 aa).

16-21 (GGGMAG) provides a ligand contact to FAD.

Belongs to the MnmG family. TrmFO subfamily. Requires FAD as cofactor.

It is found in the cytoplasm. It catalyses the reaction uridine(54) in tRNA + (6R)-5,10-methylene-5,6,7,8-tetrahydrofolate + NADH + H(+) = 5-methyluridine(54) in tRNA + (6S)-5,6,7,8-tetrahydrofolate + NAD(+). It carries out the reaction uridine(54) in tRNA + (6R)-5,10-methylene-5,6,7,8-tetrahydrofolate + NADPH + H(+) = 5-methyluridine(54) in tRNA + (6S)-5,6,7,8-tetrahydrofolate + NADP(+). Its function is as follows. Catalyzes the folate-dependent formation of 5-methyl-uridine at position 54 (M-5-U54) in all tRNAs. The chain is Methylenetetrahydrofolate--tRNA-(uracil-5-)-methyltransferase TrmFO from Maricaulis maris (strain MCS10) (Caulobacter maris).